We begin with the raw amino-acid sequence, 233 residues long: Syntaxin-52 (233 aa).

At 1–209 (MASSSDPWMR…NKSMKSGCSC (209 aa)) the chain is on the cytoplasmic side. Residues 137 to 199 (RQVMREQDEG…RRVQKSLALM (63 aa)) enclose the t-SNARE coiled-coil homology domain. A helical; Anchor for type IV membrane protein transmembrane segment spans residues 210 to 230 (MSMLLSVLGIVGLALVIWLLV). The Vesicular segment spans residues 231–233 (KYL).

This sequence belongs to the syntaxin family. Interacts either with VTI11 and SYP21, or with VTI11 and SYP22 in the prevacuolar compartment, or with VTI12 and SYP61 in the trans-Golgi network to form t-SNARE complexes. As to expression, expressed in root, leaf, stem, flower and silique.

The protein resides in the golgi apparatus. The protein localises to the trans-Golgi network membrane. Its subcellular location is the prevacuolar compartment membrane. In terms of biological role, vesicle trafficking protein that functions in the secretory pathway. This is Syntaxin-52 (SYP52) from Arabidopsis thaliana (Mouse-ear cress).